Here is an 869-residue protein sequence, read N- to C-terminus: Speckle targeted PIP5K1A-regulated poly(A) polymerase (869 aa).

Residues 16–46 (FRCCLCHVTTANRPSLDAHLGGRKHRHLVEL) form a Matrin-type zinc finger. The RRM domain occupies 56–128 (RSVFVSGFPR…HRLRVRPREQ (73 aa)). Positions 111–147 (QPQHTLGGHRLRVRPREQKEFQSPASKSPKGAAPDSH) are disordered. Ser205 contacts ATP. 2 residues coordinate Mg(2+): Asp216 and Asp218. Residues Asp216 and Asp218 each contribute to the UTP site. Residues 252-315 (QALACTPASP…PASPLQEDRG (64 aa)) are disordered. Positions 259-269 (ASPPDSQPPSP) are enriched in pro residues. The span at 279–290 (TPSSSLAPQTPD) shows a compositional bias: polar residues. Residue Asn391 participates in ATP binding. UTP-binding residues include Asn391, Arg413, Tyr431, and His548. The 59-residue stretch at 490 to 548 (LSSLLAQFFSCVSCWDLRGSLLSLREGQALPVAGDLPSNRWEGLRLGPMNLQDPFDLSH) folds into the PAP-associated domain. Positions 597-869 (SSPSSLLSAT…VFLPQALRNL (273 aa)) are KA1; binds the bulging loops of U6 snRNA but is dispensable for terminal uridylyltransferase activity. Composition is skewed to basic and acidic residues over residues 637–648 (GTKRLRSDRGGP) and 660–686 (LKLD…HSED). Disordered stretches follow at residues 637 to 686 (GTKR…HSED) and 720 to 755 (LATG…TGRG). Ser684 and Ser748 each carry phosphoserine.

This sequence belongs to the DNA polymerase type-B-like family. As to quaternary structure, associates with the cleavage and polyadenylation specificity factor (CPSF) complex. Interacts with CPSF1 and CPSF3; the interaction is direct. Interacts with PIP5K1A. The cofactor is Mg(2+). Requires Mn(2+) as cofactor. Phosphorylated by CK1 in the proline-rich (Pro-rich) region.

The protein resides in the nucleus. It localises to the nucleolus. The protein localises to the nucleus speckle. The enzyme catalyses RNA(n) + UTP = RNA(n)-3'-uridine ribonucleotide + diphosphate. The catalysed reaction is RNA(n) + ATP = RNA(n)-3'-adenine ribonucleotide + diphosphate. With respect to regulation, adenylyltransferase activity is specifically phosphatidylinositol 4,5-bisphosphate (PtdIns(4,5)P2). Poly(A) polymerase that creates the 3'-poly(A) tail of specific pre-mRNAs. Localizes to nuclear speckles together with PIP5K1A and mediates polyadenylation of a select set of mRNAs, such as HMOX1. In addition to polyadenylation, it is also required for the 3'-end cleavage of pre-mRNAs: binds to the 3'UTR of targeted pre-mRNAs and promotes the recruitment and assembly of the CPSF complex on the 3'UTR of pre-mRNAs. In addition to adenylyltransferase activity, also has uridylyltransferase activity. However, the ATP ratio is higher than UTP in cells, suggesting that it functions primarily as a poly(A) polymerase. Acts as a specific terminal uridylyltransferase for U6 snRNA in vitro: responsible for a controlled elongation reaction that results in the restoration of the four 3'-terminal UMP-residues found in newly transcribed U6 snRNA. Not involved in replication-dependent histone mRNA degradation. This chain is Speckle targeted PIP5K1A-regulated poly(A) polymerase (TUT1), found in Ailuropoda melanoleuca (Giant panda).